A 93-amino-acid polypeptide reads, in one-letter code: Aspartyl/glutamyl-tRNA(Asn/Gln) amidotransferase subunit C (93 aa).

It belongs to the GatC family. As to quaternary structure, heterotrimer of A, B and C subunits.

The catalysed reaction is L-glutamyl-tRNA(Gln) + L-glutamine + ATP + H2O = L-glutaminyl-tRNA(Gln) + L-glutamate + ADP + phosphate + H(+). It catalyses the reaction L-aspartyl-tRNA(Asn) + L-glutamine + ATP + H2O = L-asparaginyl-tRNA(Asn) + L-glutamate + ADP + phosphate + 2 H(+). Its function is as follows. Allows the formation of correctly charged Asn-tRNA(Asn) or Gln-tRNA(Gln) through the transamidation of misacylated Asp-tRNA(Asn) or Glu-tRNA(Gln) in organisms which lack either or both of asparaginyl-tRNA or glutaminyl-tRNA synthetases. The reaction takes place in the presence of glutamine and ATP through an activated phospho-Asp-tRNA(Asn) or phospho-Glu-tRNA(Gln). The polypeptide is Aspartyl/glutamyl-tRNA(Asn/Gln) amidotransferase subunit C (Nautilia profundicola (strain ATCC BAA-1463 / DSM 18972 / AmH)).